The primary structure comprises 194 residues: Orotate phosphoribosyltransferase (194 aa).

Residues Arg-102, Lys-103, Lys-106, His-108, and 129 to 137 contribute to the 5-phospho-alpha-D-ribose 1-diphosphate site; that span reads EDVVTTGGS. The orotate site is built by Thr-133 and Arg-161.

The protein belongs to the purine/pyrimidine phosphoribosyltransferase family. PyrE subfamily. In terms of assembly, homodimer. Mg(2+) serves as cofactor.

The catalysed reaction is orotidine 5'-phosphate + diphosphate = orotate + 5-phospho-alpha-D-ribose 1-diphosphate. It participates in pyrimidine metabolism; UMP biosynthesis via de novo pathway; UMP from orotate: step 1/2. Functionally, catalyzes the transfer of a ribosyl phosphate group from 5-phosphoribose 1-diphosphate to orotate, leading to the formation of orotidine monophosphate (OMP). The sequence is that of Orotate phosphoribosyltransferase from Prochlorococcus marinus (strain MIT 9211).